Reading from the N-terminus, the 205-residue chain is Guanylyl cyclase-activating protein 1 (205 aa).

Glycine 2 is lipidated: N-myristoyl glycine. Asparagine 3 is modified (deamidated asparagine). EF-hand domains are found at residues 14–49, 51–86, 87–122, and 131–166; these read SSTECHQWYKKFMTECPSGQLTLYEFRQFFGLKNLS, WASQYVEQMFETFDFNKDGYIDFMEYVAALSLVLKG, KVEQKLRWYFKLYDVDGNGCIDRDELLTIIRAIRAI, and TAEEFTDTVFSKIDVNGDGELSLEEFMEGVQKDQML. Ca(2+) contacts are provided by aspartate 64, asparagine 66, aspartate 68, tyrosine 70, glutamate 75, aspartate 100, aspartate 102, asparagine 104, cysteine 106, glutamate 111, aspartate 144, asparagine 146, aspartate 148, glutamate 150, and glutamate 155. The segment at 185 to 205 is disordered; that stretch reads NGEQDEEGASGRETEAAEADG.

As to quaternary structure, homodimer. As to expression, detected in the retina. Detected in rod and cone photoreceptor cells (at protein level). Also present in certain pinealocytes.

Its subcellular location is the membrane. It localises to the photoreceptor inner segment. The protein localises to the cell projection. It is found in the cilium. The protein resides in the photoreceptor outer segment. Functionally, stimulates retinal guanylyl cyclase when free calcium ions concentration is low and inhibits guanylyl cyclase when free calcium ions concentration is elevated. This Ca(2+)-sensitive regulation of retinal guanylyl cyclase is a key event in recovery of the dark state of rod photoreceptors following light exposure. May be involved in cone photoreceptor light response and recovery of response in bright light. The sequence is that of Guanylyl cyclase-activating protein 1 (GUCA1A) from Bos taurus (Bovine).